The chain runs to 367 residues: Phosphoribosylaminoimidazole-succinocarboxamide synthase (367 aa).

It belongs to the SAICAR synthetase family.

It carries out the reaction 5-amino-1-(5-phospho-D-ribosyl)imidazole-4-carboxylate + L-aspartate + ATP = (2S)-2-[5-amino-1-(5-phospho-beta-D-ribosyl)imidazole-4-carboxamido]succinate + ADP + phosphate + 2 H(+). It participates in purine metabolism; IMP biosynthesis via de novo pathway; 5-amino-1-(5-phospho-D-ribosyl)imidazole-4-carboxamide from 5-amino-1-(5-phospho-D-ribosyl)imidazole-4-carboxylate: step 1/2. The sequence is that of Phosphoribosylaminoimidazole-succinocarboxamide synthase from Shewanella amazonensis (strain ATCC BAA-1098 / SB2B).